A 513-amino-acid polypeptide reads, in one-letter code: ATP synthase subunit alpha (513 aa).

169 to 176 (GDRQTGKT) serves as a coordination point for ATP.

Belongs to the ATPase alpha/beta chains family. F-type ATPases have 2 components, CF(1) - the catalytic core - and CF(0) - the membrane proton channel. CF(1) has five subunits: alpha(3), beta(3), gamma(1), delta(1), epsilon(1). CF(0) has three main subunits: a(1), b(2) and c(9-12). The alpha and beta chains form an alternating ring which encloses part of the gamma chain. CF(1) is attached to CF(0) by a central stalk formed by the gamma and epsilon chains, while a peripheral stalk is formed by the delta and b chains.

The protein resides in the cell inner membrane. The catalysed reaction is ATP + H2O + 4 H(+)(in) = ADP + phosphate + 5 H(+)(out). Its function is as follows. Produces ATP from ADP in the presence of a proton gradient across the membrane. The alpha chain is a regulatory subunit. The sequence is that of ATP synthase subunit alpha from Bordetella petrii (strain ATCC BAA-461 / DSM 12804 / CCUG 43448).